Consider the following 932-residue polypeptide: Glycine dehydrogenase (decarboxylating) (932 aa).

At Lys685 the chain carries N6-(pyridoxal phosphate)lysine.

Belongs to the GcvP family. As to quaternary structure, the glycine cleavage system is composed of four proteins: P, T, L and H. Pyridoxal 5'-phosphate is required as a cofactor.

The catalysed reaction is N(6)-[(R)-lipoyl]-L-lysyl-[glycine-cleavage complex H protein] + glycine + H(+) = N(6)-[(R)-S(8)-aminomethyldihydrolipoyl]-L-lysyl-[glycine-cleavage complex H protein] + CO2. In terms of biological role, the glycine cleavage system catalyzes the degradation of glycine. The P protein binds the alpha-amino group of glycine through its pyridoxal phosphate cofactor; CO(2) is released and the remaining methylamine moiety is then transferred to the lipoamide cofactor of the H protein. The sequence is that of Glycine dehydrogenase (decarboxylating) from Brucella melitensis biotype 1 (strain ATCC 23456 / CCUG 17765 / NCTC 10094 / 16M).